Here is a 20-residue protein sequence, read N- to C-terminus: Mu-conotoxin SIIIB (20 aa).

Q1 bears the Pyrrolidone carboxylic acid mark. 3 disulfides stabilise this stretch: C3–C13, C4–C19, and C8–C20. The residue at position 20 (C20) is a Cysteine amide.

Expressed by the venom duct.

The protein resides in the secreted. Functionally, mu-conotoxins block voltage-gated sodium channels (VGSC). Potently displaces (125)I-TIIIA from native rat brain Nav1.2/SCN2A (IC(50) is 5 nM) and muscle Nav1.4/SCN4A (IC(50) is 3 nM) VGSCs. Potently and irreversibly inhibits current through Xenopus oocyte-expressed Nav1.2/SCN2A and Nav1.4/SCN4A. This Conus striatus (Striated cone) protein is Mu-conotoxin SIIIB.